A 449-amino-acid polypeptide reads, in one-letter code: Heterogeneous nuclear ribonucleoprotein H2 (449 aa).

Methionine 1 is subject to N-acetylmethionine. Position 2 is an N-acetylmethionine; in Heterogeneous nuclear ribonucleoprotein H2, N-terminally processed (methionine 2). Residues 11 to 90 (FVVKVRGLPW…RYVEVFKSNS (80 aa)) form the RRM 1 domain. A Phosphoserine modification is found at serine 23. Residue lysine 35 forms a Glycyl lysine isopeptide (Lys-Gly) (interchain with G-Cter in SUMO2) linkage. A phosphoserine mark is found at serine 54 and serine 63. Lysine 87 participates in a covalent cross-link: Glycyl lysine isopeptide (Lys-Gly) (interchain with G-Cter in SUMO2). Serine 90 carries the phosphoserine modification. A Glycyl lysine isopeptide (Lys-Gly) (interchain with G-Cter in SUMO2) cross-link involves residue lysine 98. The region spanning 111–188 (GFVRLRGLPF…RYIEIFKSSR (78 aa)) is the RRM 2 domain. Arginine 233 is modified (dimethylated arginine; alternate). The residue at position 233 (arginine 233) is an Omega-N-methylarginine; alternate. The stretch at 234-249 (GAYGGGYGGYDDYGGY) is one 1-1 repeat. Residues 234–433 (GAYGGGYGGY…YGGQSSMSGY (200 aa)) are 2 X 16 AA Gly-rich approximate repeats. Tyrosine 246 is subject to Phosphotyrosine. Residues 289–364 (HCVHMRGLPY…RYVELFLNST (76 aa)) enclose the RRM 3 domain. Serine 310 carries the phosphoserine modification. Repeat copies occupy residues 354-372 (HRYVELFLNSTAGTSGGAY), 374-392 (HSYVELFLNSTAGASGGAY), and 418-433 (GGYGGGYGGQSSMSGY). A 2 X 19 AA perfect repeats region spans residues 354 to 392 (HRYVELFLNSTAGTSGGAYDHSYVELFLNSTAGASGGAY).

In terms of assembly, component of a ribonucleoprotein complex containing mRNAs and RNA-binding proteins including DDX5, HNRNPH2 and SRSF1 as well as splicing regulator ARVCF. Interacts with TXNL4/DIM1.

It localises to the nucleus. The protein resides in the nucleoplasm. In terms of biological role, this protein is a component of the heterogeneous nuclear ribonucleoprotein (hnRNP) complexes which provide the substrate for the processing events that pre-mRNAs undergo before becoming functional, translatable mRNAs in the cytoplasm. Binds poly(RG). This is Heterogeneous nuclear ribonucleoprotein H2 (Hnrnph2) from Mus musculus (Mouse).